The primary structure comprises 136 residues: MARTKQTARKSTGGKAPRKQLASKAARKSAPSTGGVKKPHRYKPGTVALREIRRFQKSTELLIRKLPFQRLVREIAQDFKTDLRFQSSAIGALQESVEAYLVSLFEDTNLCAIHAKRVTIQKKDIQLARRLRGERS.

The tract at residues 1–43 (MARTKQTARKSTGGKAPRKQLASKAARKSAPSTGGVKKPHRYK) is disordered. K5 is subject to N6,N6,N6-trimethyllysine; alternate. Residue K5 is modified to N6,N6-dimethyllysine; alternate. Residues K5 and K10 each carry the N6-methyllysine; alternate modification. K10 bears the N6-acetyllysine; alternate mark. S11 is subject to Phosphoserine. N6,N6-dimethyllysine; alternate is present on K15. N6-acetyllysine; alternate occurs at positions 15, 19, 24, 28, and 37. An N6-methyllysine; alternate mark is found at K19, K24, K28, and K37. Residues K28 and K37 each carry the N6,N6,N6-trimethyllysine; alternate modification. N6,N6-dimethyllysine; alternate occurs at positions 28 and 37. Residues K57 and K65 each carry the N6-acetyllysine modification. An N6,N6,N6-trimethyllysine; alternate modification is found at K80. An N6,N6-dimethyllysine; alternate modification is found at K80. N6-methyllysine; alternate is present on K80.

The protein belongs to the histone H3 family. In terms of assembly, the nucleosome is a histone octamer containing two molecules each of H2A, H2B, H3 and H4 assembled in one H3-H4 heterotetramer and two H2A-H2B heterodimers. The octamer wraps approximately 147 bp of DNA. Post-translationally, phosphorylated to form H3S10ph. H3S10ph promotes subsequent H3K14ac formation and is required for transcriptional activation through TBP recruitment to the promoters. Mono-, di- and trimethylated by the COMPASS complex to form H3K4me1/2/3. H3K4me activates gene expression by regulating transcription elongation and plays a role in telomere length maintenance. H3K4me enrichment correlates with transcription levels, and occurs in a 5' to 3' gradient with H3K4me3 enrichment at the 5'-end of genes, shifting to H3K4me2 and then H3K4me1. Methylated by SET2 to form H3K36me. H3K36me represses gene expression. Methylated by DOT1 to form H3K79me. H3K79me is required for association of SIR proteins with telomeric regions and for telomeric silencing. The COMPASS-mediated formation of H3K4me2/3 and the DOT1-mediated formation of H3K79me require H2BK123ub1. In terms of processing, acetylation of histone H3 leads to transcriptional activation. H3K14ac formation by GCN5 is promoted by H3S10ph. H3K14ac can also be formed by ESA1. H3K56ac formation occurs predominantly in newly synthesized H3 molecules during G1, S and G2/M of the cell cycle and may be involved in DNA repair.

The protein resides in the nucleus. Its subcellular location is the chromosome. Functionally, core component of nucleosome. Nucleosomes wrap and compact DNA into chromatin, limiting DNA accessibility to the cellular machineries which require DNA as a template. Histones thereby play a central role in transcription regulation, DNA repair, DNA replication and chromosomal stability. DNA accessibility is regulated via a complex set of post-translational modifications of histones, also called histone code, and nucleosome remodeling. In Meyerozyma guilliermondii (strain ATCC 6260 / CBS 566 / DSM 6381 / JCM 1539 / NBRC 10279 / NRRL Y-324) (Yeast), this protein is Histone H3.1/H3.2 (HHT1).